Consider the following 141-residue polypeptide: ATP synthase epsilon chain (141 aa).

Belongs to the ATPase epsilon chain family. In terms of assembly, F-type ATPases have 2 components, CF(1) - the catalytic core - and CF(0) - the membrane proton channel. CF(1) has five subunits: alpha(3), beta(3), gamma(1), delta(1), epsilon(1). CF(0) has three main subunits: a, b and c.

The protein localises to the cell inner membrane. Functionally, produces ATP from ADP in the presence of a proton gradient across the membrane. In Methylobacillus flagellatus (strain ATCC 51484 / DSM 6875 / VKM B-1610 / KT), this protein is ATP synthase epsilon chain.